Reading from the N-terminus, the 1383-residue chain is DNA-directed RNA polymerase subunit beta (1383 aa).

The protein belongs to the RNA polymerase beta chain family. The RNAP catalytic core consists of 2 alpha, 1 beta, 1 beta' and 1 omega subunit. When a sigma factor is associated with the core the holoenzyme is formed, which can initiate transcription.

It catalyses the reaction RNA(n) + a ribonucleoside 5'-triphosphate = RNA(n+1) + diphosphate. Functionally, DNA-dependent RNA polymerase catalyzes the transcription of DNA into RNA using the four ribonucleoside triphosphates as substrates. This Bartonella tribocorum (strain CIP 105476 / IBS 506) protein is DNA-directed RNA polymerase subunit beta.